Consider the following 864-residue polypeptide: Nitrate reductase [NADH] (864 aa).

Cysteine 139 provides a ligand contact to Mo-molybdopterin. Residues 497–572 (PRQYTMEEVA…LAQYYIGDLV (76 aa)) enclose the Cytochrome b5 heme-binding domain. Histidine 532 and histidine 555 together coordinate heme. The 113-residue stretch at 606–718 (RQKVKLPLIE…KGPLGHFVYD (113 aa)) folds into the FAD-binding FR-type domain. Residues 658-661 (RAYT), 675-679 (LIKVY), phenylalanine 680, phenylalanine 687, 692-694 (KMS), and threonine 746 each bind FAD.

It belongs to the nitrate reductase family. As to quaternary structure, homodimer. Requires FAD as cofactor. It depends on heme as a cofactor. Mo-molybdopterin is required as a cofactor.

The catalysed reaction is nitrite + NAD(+) + H2O = nitrate + NADH + H(+). Functionally, nitrate reductase is a key enzyme involved in the first step of nitrate assimilation in plants, fungi and bacteria. The chain is Nitrate reductase [NADH] (NITA) from Volvox carteri (Green alga).